A 641-amino-acid chain; its full sequence is Methylenetetrahydrofolate reductase 2 (641 aa).

Catalysis depends on Glu-20, which acts as the Proton donor/acceptor. Residues 20–25 (EYFPPK) and 52–53 (TW) contribute to the NAD(+) site. FAD is bound by residues 52–53 (TW), His-81, 111–113 (RGD), Tyr-153, Asp-172, and Lys-179. Position 113 (Asp-113) interacts with substrate. Gln-190 lines the substrate pocket.

Belongs to the methylenetetrahydrofolate reductase family. FAD serves as cofactor.

It catalyses the reaction (6S)-5-methyl-5,6,7,8-tetrahydrofolate + NADP(+) = (6R)-5,10-methylene-5,6,7,8-tetrahydrofolate + NADPH + H(+). It functions in the pathway one-carbon metabolism; tetrahydrofolate interconversion. Its function is as follows. Major methylenetetrahydrofolate reductase required to generate the methyl groups necessary for methionine synthetase to convert homocysteine to methionine. Performs 15 to 20 percent of the total methylenetetrahydrofolate reductase activity of the cells. This Schizosaccharomyces pombe (strain 972 / ATCC 24843) (Fission yeast) protein is Methylenetetrahydrofolate reductase 2 (met11).